The following is a 245-amino-acid chain: 1-(5-phosphoribosyl)-5-[(5-phosphoribosylamino)methylideneamino] imidazole-4-carboxamide isomerase (245 aa).

Catalysis depends on Asp10, which acts as the Proton acceptor. The active-site Proton donor is the Asp129.

The protein belongs to the HisA/HisF family.

Its subcellular location is the cytoplasm. It carries out the reaction 1-(5-phospho-beta-D-ribosyl)-5-[(5-phospho-beta-D-ribosylamino)methylideneamino]imidazole-4-carboxamide = 5-[(5-phospho-1-deoxy-D-ribulos-1-ylimino)methylamino]-1-(5-phospho-beta-D-ribosyl)imidazole-4-carboxamide. The protein operates within amino-acid biosynthesis; L-histidine biosynthesis; L-histidine from 5-phospho-alpha-D-ribose 1-diphosphate: step 4/9. This chain is 1-(5-phosphoribosyl)-5-[(5-phosphoribosylamino)methylideneamino] imidazole-4-carboxamide isomerase, found in Parafrankia sp. (strain EAN1pec).